We begin with the raw amino-acid sequence, 360 residues long: Mitogen-activated protein kinase 14 (360 aa).

Ser-2 bears the N-acetylserine mark. A Phosphoserine modification is found at Ser-2. Thr-16 carries the phosphothreonine modification. Residues 24–308 (YQNLSPVGSG…AAQALAHAYF (285 aa)) form the Protein kinase domain. ATP contacts are provided by residues 30 to 38 (VGSGAYGSV) and Lys-53. Position 53 is an N6-acetyllysine (Lys-53). Asp-150 acts as the Proton acceptor in catalysis. An N6-acetyllysine modification is found at Lys-152. Thr-180 carries the phosphothreonine; by MAP2K3, MAP2K4, MAP2K6 and autocatalysis modification. Tyr-182 bears the Phosphotyrosine; by MAP2K3, MAP2K4, MAP2K6 and autocatalysis mark. Thr-263 bears the Phosphothreonine mark. A Phosphotyrosine; by ZAP70 modification is found at Tyr-323.

Belongs to the protein kinase superfamily. CMGC Ser/Thr protein kinase family. MAP kinase subfamily. In terms of assembly, component of a signaling complex containing at least AKAP13, PKN1, MAPK14, ZAK and MAP2K3. Within this complex, AKAP13 interacts directly with PKN1, which in turn recruits MAPK14, MAP2K3 and ZAK. Binds to a kinase interaction motif within the protein tyrosine phosphatase, PTPRR. This interaction retains MAPK14 in the cytoplasm and prevents nuclear accumulation. Interacts with SPAG9 and GADD45A. Interacts with CDC25B, CDC25C, DUSP1, DUSP10, DUSP16, NP60, SUPT20H and TAB1. Interacts with casein kinase II subunits CSNK2A1 and CSNK2B. Interacts with PPM1D. Interacts with CDK5RAP3; recruits PPM1D to MAPK14 and may regulate its dephosphorylation. Interacts with DUSP2; this interaction does not lead to catalytic activation of DUSP2 and dephosphrylation of MAPK14. Mg(2+) is required as a cofactor. Dually phosphorylated on Thr-180 and Tyr-182 by the MAP2Ks MAP2K3/MKK3, MAP2K4/MKK4 and MAP2K6/MKK6 in response to inflammatory cytokines, environmental stress or growth factors, which activates the enzyme. Dual phosphorylation can also be mediated by TAB1-mediated autophosphorylation. TCR engagement in T-cells also leads to Tyr-323 phosphorylation by ZAP70. Dephosphorylated and inactivated by DUPS1, DUSP10 and DUSP16. PPM1D also mediates dephosphorylation and inactivation of MAPK14. Post-translationally, acetylated at Lys-53 and Lys-152 by KAT2B and EP300. Acetylation at Lys-53 increases the affinity for ATP and enhances kinase activity. Lys-53 and Lys-152 are deacetylated by HDAC3. In terms of processing, ubiquitinated. Ubiquitination leads to degradation by the proteasome pathway.

Its subcellular location is the cytoplasm. It localises to the nucleus. The catalysed reaction is L-seryl-[protein] + ATP = O-phospho-L-seryl-[protein] + ADP + H(+). The enzyme catalyses L-threonyl-[protein] + ATP = O-phospho-L-threonyl-[protein] + ADP + H(+). Its activity is regulated as follows. Activated by cell stresses such as DNA damage, heat shock, osmotic shock, anisomycin and sodium arsenite, as well as pro-inflammatory stimuli such as bacterial lipopolysaccharide (LPS) and interleukin-1. Activation occurs through dual phosphorylation of Thr-180 and Tyr-182 by either of two dual specificity kinases, MAP2K3/MKK3 or MAP2K6/MKK6, and potentially also MAP2K4/MKK4, as well as by TAB1-mediated autophosphorylation. MAPK14 phosphorylated on both Thr-180 and Tyr-182 is 10-20-fold more active than MAPK14 phosphorylated only on Thr-180, whereas MAPK14 phosphorylated on Tyr-182 alone is inactive. whereas Thr-180 is necessary for catalysis, Tyr-182 may be required for auto-activation and substrate recognition. Phosphorylated at Tyr-323 by ZAP70 in an alternative activation pathway in response to TCR signaling in T-cells. This alternative pathway is inhibited by GADD45A. Inhibited by dual specificity phosphatases, such as DUSP1, DUSP10, and DUSP16. Specifically inhibited by the binding of pyridinyl-imidazole compounds, which are cytokine-suppressive anti-inflammatory drugs (CSAID). SB203580 is an inhibitor of MAPK14. Serine/threonine kinase which acts as an essential component of the MAP kinase signal transduction pathway. MAPK14 is one of the four p38 MAPKs which play an important role in the cascades of cellular responses evoked by extracellular stimuli such as pro-inflammatory cytokines or physical stress leading to direct activation of transcription factors. Accordingly, p38 MAPKs phosphorylate a broad range of proteins and it has been estimated that they may have approximately 200 to 300 substrates each. Some of the targets are downstream kinases which are activated through phosphorylation and further phosphorylate additional targets. RPS6KA5/MSK1 and RPS6KA4/MSK2 can directly phosphorylate and activate transcription factors such as CREB1, ATF1, the NF-kappa-B isoform RELA/NFKB3, STAT1 and STAT3, but can also phosphorylate histone H3 and the nucleosomal protein HMGN1. RPS6KA5/MSK1 and RPS6KA4/MSK2 play important roles in the rapid induction of immediate-early genes in response to stress or mitogenic stimuli, either by inducing chromatin remodeling or by recruiting the transcription machinery. On the other hand, two other kinase targets, MAPKAPK2/MK2 and MAPKAPK3/MK3, participate in the control of gene expression mostly at the post-transcriptional level, by phosphorylating ZFP36 (tristetraprolin) and ELAVL1, and by regulating EEF2K, which is important for the elongation of mRNA during translation. MKNK1/MNK1 and MKNK2/MNK2, two other kinases activated by p38 MAPKs, regulate protein synthesis by phosphorylating the initiation factor EIF4E2. MAPK14 also interacts with casein kinase II, leading to its activation through autophosphorylation and further phosphorylation of TP53/p53. In the cytoplasm, the p38 MAPK pathway is an important regulator of protein turnover. For example, CFLAR is an inhibitor of TNF-induced apoptosis whose proteasome-mediated degradation is regulated by p38 MAPK phosphorylation. In a similar way, MAPK14 phosphorylates the ubiquitin ligase SIAH2, regulating its activity towards EGLN3. MAPK14 may also inhibit the lysosomal degradation pathway of autophagy by interfering with the intracellular trafficking of the transmembrane protein ATG9. Another function of MAPK14 is to regulate the endocytosis of membrane receptors by different mechanisms that impinge on the small GTPase RAB5A. In addition, clathrin-mediated EGFR internalization induced by inflammatory cytokines and UV irradiation depends on MAPK14-mediated phosphorylation of EGFR itself as well as of RAB5A effectors. Ectodomain shedding of transmembrane proteins is regulated by p38 MAPKs as well. In response to inflammatory stimuli, p38 MAPKs phosphorylate the membrane-associated metalloprotease ADAM17. Such phosphorylation is required for ADAM17-mediated ectodomain shedding of TGF-alpha family ligands, which results in the activation of EGFR signaling and cell proliferation. Another p38 MAPK substrate is FGFR1. FGFR1 can be translocated from the extracellular space into the cytosol and nucleus of target cells, and regulates processes such as rRNA synthesis and cell growth. FGFR1 translocation requires p38 MAPK activation. In the nucleus, many transcription factors are phosphorylated and activated by p38 MAPKs in response to different stimuli. Classical examples include ATF1, ATF2, ATF6, ELK1, PTPRH, DDIT3, TP53/p53 and MEF2C and MEF2A. The p38 MAPKs are emerging as important modulators of gene expression by regulating chromatin modifiers and remodelers. The promoters of several genes involved in the inflammatory response, such as IL6, IL8 and IL12B, display a p38 MAPK-dependent enrichment of histone H3 phosphorylation on 'Ser-10' (H3S10ph) in LPS-stimulated myeloid cells. This phosphorylation enhances the accessibility of the cryptic NF-kappa-B-binding sites marking promoters for increased NF-kappa-B recruitment. Phosphorylates CDC25B and CDC25C which is required for binding to 14-3-3 proteins and leads to initiation of a G2 delay after ultraviolet radiation. Phosphorylates TIAR following DNA damage, releasing TIAR from GADD45A mRNA and preventing mRNA degradation. The p38 MAPKs may also have kinase-independent roles, which are thought to be due to the binding to targets in the absence of phosphorylation. Protein O-Glc-N-acylation catalyzed by the OGT is regulated by MAPK14, and, although OGT does not seem to be phosphorylated by MAPK14, their interaction increases upon MAPK14 activation induced by glucose deprivation. This interaction may regulate OGT activity by recruiting it to specific targets such as neurofilament H, stimulating its O-Glc-N-acylation. Required in mid-fetal development for the growth of embryo-derived blood vessels in the labyrinth layer of the placenta. Also plays an essential role in developmental and stress-induced erythropoiesis, through regulation of EPO gene expression. Phosphorylates S100A9 at 'Thr-113'. The polypeptide is Mitogen-activated protein kinase 14 (Pan troglodytes (Chimpanzee)).